A 305-amino-acid chain; its full sequence is Phosphatidate cytidylyltransferase (305 aa).

The next 7 helical transmembrane spans lie at 24–44 (LLVFLVILLCTSLYPSSAFIV), 97–117 (PEHVDLIPWFFLFFWTVHLVF), 124–144 (LGPIGSTGLALFCMLYVSVPI), 151–171 (LYGFVHTDTPFIGIWWAIFLI), 202–222 (TVVGFVAGCIASILVSLIFYS), 232–252 (IAMPWILVALGIILGISGFFG), and 277–297 (MLDVLDSLLLSTPIVYAILLI).

Belongs to the CDS family.

Its subcellular location is the cell membrane. It catalyses the reaction a 1,2-diacyl-sn-glycero-3-phosphate + CTP + H(+) = a CDP-1,2-diacyl-sn-glycerol + diphosphate. The protein operates within phospholipid metabolism; CDP-diacylglycerol biosynthesis; CDP-diacylglycerol from sn-glycerol 3-phosphate: step 3/3. The sequence is that of Phosphatidate cytidylyltransferase (cdsA) from Chlamydia muridarum (strain MoPn / Nigg).